We begin with the raw amino-acid sequence, 1388 residues long: DNA-directed RNA polymerase subunit beta' (1388 aa).

Zn(2+)-binding residues include C70, C72, C85, and C88. Residues D461, D463, and D465 each coordinate Mg(2+). Zn(2+) is bound by residues C808, C882, C889, and C892.

The protein belongs to the RNA polymerase beta' chain family. The RNAP catalytic core consists of 2 alpha, 1 beta, 1 beta' and 1 omega subunit. When a sigma factor is associated with the core the holoenzyme is formed, which can initiate transcription. The cofactor is Mg(2+). Zn(2+) serves as cofactor.

It catalyses the reaction RNA(n) + a ribonucleoside 5'-triphosphate = RNA(n+1) + diphosphate. DNA-dependent RNA polymerase catalyzes the transcription of DNA into RNA using the four ribonucleoside triphosphates as substrates. The chain is DNA-directed RNA polymerase subunit beta' from Acidiphilium cryptum (strain JF-5).